Here is a 106-residue protein sequence, read N- to C-terminus: NADH-quinone oxidoreductase subunit K (106 aa).

3 helical membrane-spanning segments follow: residues 8–28 (IGIE…IFGV), 35–55 (IIMF…FVAF), and 66–86 (VFVF…LAIL).

The protein belongs to the complex I subunit 4L family. In terms of assembly, NDH-1 is composed of 14 different subunits. Subunits NuoA, H, J, K, L, M, N constitute the membrane sector of the complex.

It is found in the cell inner membrane. The catalysed reaction is a quinone + NADH + 5 H(+)(in) = a quinol + NAD(+) + 4 H(+)(out). Its function is as follows. NDH-1 shuttles electrons from NADH, via FMN and iron-sulfur (Fe-S) centers, to quinones in the respiratory chain. The immediate electron acceptor for the enzyme in this species is believed to be a menaquinone. Couples the redox reaction to proton translocation (for every two electrons transferred, four hydrogen ions are translocated across the cytoplasmic membrane), and thus conserves the redox energy in a proton gradient. The chain is NADH-quinone oxidoreductase subunit K from Flavobacterium psychrophilum (strain ATCC 49511 / DSM 21280 / CIP 103535 / JIP02/86).